We begin with the raw amino-acid sequence, 25 residues long: Chitinolytic alpha-amylase inhibitor PvCAI (25 aa).

As to quaternary structure, homodimer.

The enzyme catalyses Random endo-hydrolysis of N-acetyl-beta-D-glucosaminide (1-&gt;4)-beta-linkages in chitin and chitodextrins.. Functionally, alpha-amylase inhibitor, active against Z.subfasciatus alpha-amylase (ZSA) but not porcine pancreatic alpha-amylase (PPA). Has chitinase activity. This chain is Chitinolytic alpha-amylase inhibitor PvCAI, found in Phaseolus vulgaris (Kidney bean).